We begin with the raw amino-acid sequence, 302 residues long: Geranylgeranyl diphosphate synthase (302 aa).

Residues Lys-53, Arg-56, and His-87 each contribute to the isopentenyl diphosphate site. Asp-94 and Asp-100 together coordinate Mg(2+). Residue Arg-105 participates in (2E,6E)-farnesyl diphosphate binding. Arg-106 contacts isopentenyl diphosphate. Lys-189, Thr-190, and Gln-227 together coordinate (2E,6E)-farnesyl diphosphate.

It belongs to the FPP/GGPP synthase family. Requires Mg(2+) as cofactor.

It carries out the reaction isopentenyl diphosphate + (2E,6E)-farnesyl diphosphate = (2E,6E,10E)-geranylgeranyl diphosphate + diphosphate. It functions in the pathway isoprenoid biosynthesis; geranylgeranyl diphosphate biosynthesis; geranylgeranyl diphosphate from farnesyl diphosphate and isopentenyl diphosphate: step 1/1. Catalyzes the condensation of farnesyl diphosphate (FPP) and isopentenyl diphosphate (IPP) to yield geranylgeranyl diphosphate (GGPP) needed for biosynthesis of carotenoids and diterpenes. The polypeptide is Geranylgeranyl diphosphate synthase (crtE) (Pantoea ananas (Erwinia uredovora)).